Here is a 100-residue protein sequence, read N- to C-terminus: Small ribosomal subunit protein uS14c (100 aa).

The protein belongs to the universal ribosomal protein uS14 family. Part of the 30S ribosomal subunit.

The protein resides in the plastid. Its subcellular location is the chloroplast. Functionally, binds 16S rRNA, required for the assembly of 30S particles. The sequence is that of Small ribosomal subunit protein uS14c from Platanus occidentalis (Sycamore).